The following is a 426-amino-acid chain: Meiotically up-regulated gene 170 protein (426 aa).

This sequence belongs to the arrestin family.

Its subcellular location is the cytoplasm. It is found in the nucleus. Has a role in meiosis. The sequence is that of Meiotically up-regulated gene 170 protein (mug170) from Schizosaccharomyces pombe (strain 972 / ATCC 24843) (Fission yeast).